A 398-amino-acid polypeptide reads, in one-letter code: MSDVLLVLNAGSSSIKFALYEAHTEPTADHLICEGGIGSLGHRPHFKVVNSDGSTRYDTYLPEGTSHDDAMAVLIGWIETTFPEHRLSAVGHRVVHGGALFDGPVDVTPEVIAQLRAFDRLAPLHQPHNVSAIEALAKLHPSLPQIACFDTAFHHRLPEVATAFALPRELTEQGVRRYGFHGLSYEYIAGRLPDVAGQAVADGRVVVAHLGAGASMCAMLRCRSIATTMGFTALDGLMMGSRCGELDPGVVLYLLEEKSMTAREIEDLLYRESGLLGVSGISDDMRTLLASDDPHACEAIELFVYRIARELGSLAAALGGLDALVFTGGIGEHASEIRRRVCEQAAWLGVTLDPDANASLSGAGRISAPDSKVSAWAIPTDEDLMIARHVWRLADGGR.

Asn9 is a Mg(2+) binding site. Lys16 lines the ATP pocket. Arg93 contacts substrate. The active-site Proton donor/acceptor is the Asp150. ATP contacts are provided by residues 209–213 (HLGAG), 284–286 (DMR), and 329–333 (GIGEH). Glu382 provides a ligand contact to Mg(2+).

It belongs to the acetokinase family. As to quaternary structure, homodimer. The cofactor is Mg(2+). Mn(2+) serves as cofactor.

The protein resides in the cytoplasm. It catalyses the reaction acetate + ATP = acetyl phosphate + ADP. It participates in metabolic intermediate biosynthesis; acetyl-CoA biosynthesis; acetyl-CoA from acetate: step 1/2. In terms of biological role, catalyzes the formation of acetyl phosphate from acetate and ATP. Can also catalyze the reverse reaction. The protein is Acetate kinase of Rhodopseudomonas palustris (strain ATCC BAA-98 / CGA009).